The following is a 95-amino-acid chain: MNFVIIIAILLLGISLILAFTVLNKSKSKTTMAYKRAQEEKIDTEIKMLKNLKNNVCSGASDEIIDNILNSENNILKEALKNNLDDADVCKKLRR.

The chain crosses the membrane as a helical span at residues 3–23; that stretch reads FVIIIAILLLGISLILAFTVL.

It localises to the membrane. This is an uncharacterized protein from Methanocaldococcus jannaschii (strain ATCC 43067 / DSM 2661 / JAL-1 / JCM 10045 / NBRC 100440) (Methanococcus jannaschii).